We begin with the raw amino-acid sequence, 482 residues long: MEKRTSCSVQTSTNCDNSLETLNSAHQATGAVQMRIKNANSHPDRQSQTKSMILTDAGKVTEPISRHRRNHSQHVLKDVIPPLEHPMVEKEGYLQKAKIADGGKKLRKNWSTSWIVLSGRKLEFYKDPKQQALPNVKPRPNAESVDLCGAHIEWAAKDKSSKKSVFQITTASGNEFLLQSDIDFLILDWFHAIKNAIDRLPKNPSFGSLELFSFQRSSSSEQPSHCHIDRKEQKPENRKSFMFRLHHSVSDTSDKNRVKSRLKKFISRRPSLKTLQEKGIIKDQIFGSHLHTVCEREHSTVPWFVKQCIEAVEKRGLEVDGIYRVSGNLATIQKLRFIVNQEEKLNLDDSQWEDIHVVTGALKMFFRELSEPLFPYSFFERFVEAIKKQDSDAKIETMKSLVKSLPPPNHDTMKILFGHLTKIVAKAAQNLMSTQSLGIVFGPTLLRAENESGNVAVHMVYQNQVAEFMLTEYDKIFSSEED.

A phosphoserine mark is found at serine 51, serine 111, serine 205, serine 208, and serine 250. The 112-residue stretch at 87–198 (MVEKEGYLQK…WFHAIKNAID (112 aa)) folds into the PH domain. Residues 288 to 477 (SHLHTVCERE…FMLTEYDKIF (190 aa)) form the Rho-GAP domain.

The protein resides in the cytoplasm. It localises to the membrane. Functionally, GTPase activator for the Rho-type GTPases by converting them to an inactive GDP-bound state. Has activity toward RAC1. Overexpression results in an increase in actin stress fibers and cell contraction. The sequence is that of Rho GTPase-activating protein 15 (Arhgap15) from Rattus norvegicus (Rat).